We begin with the raw amino-acid sequence, 419 residues long: Keratin, type I cytoskeletal 47 kDa (419 aa).

The interval 1 to 81 is head; sequence MSFRSSSSYS…SSSFSNFGGN (81 aa). The interval 82–117 is coil 1A; sequence DKQTMQNLNDRLASYLEKVRALEAANADLELKIREW. Residues 82–397 form the IF rod domain; that stretch reads DKQTMQNLND…RLLEGEFGSL (316 aa). Residues 118 to 139 form a linker 1 region; the sequence is YEKQKGSGIGAGSKDFSKYFEI. The interval 140-231 is coil 1B; the sequence is ISDLRNKILS…KNHEEEMSIA (92 aa). The segment at 232–254 is linker 12; it reads KSSSAGQVNVEMDAAPGIDLNKI. The coil 2 stretch occupies residues 255–393; it reads LSDMRADYET…ETYRRLLEGE (139 aa). Positions 394–419 are tail; the sequence is FGSLKSSIVQATEVSTSQSSSSSKKD.

It belongs to the intermediate filament family. In terms of assembly, heterotetramer of two type I and two type II keratins.

The polypeptide is Keratin, type I cytoskeletal 47 kDa (xk81b2) (Xenopus laevis (African clawed frog)).